The following is a 237-amino-acid chain: Probable glutathione-independent glyoxalase SNO4 (237 aa).

Residues Cys-138, His-139, and Glu-170 contribute to the active site.

The protein belongs to the peptidase C56 family. HSP31-like subfamily. Homodimer.

It is found in the cytoplasm. It localises to the P-body. It carries out the reaction methylglyoxal + H2O = (R)-lactate + H(+). Functionally, catalyzes the conversion of methylglyoxal (MG) to D-lactate in a single glutathione (GSH)-independent step. May play a role in detoxifying endogenously produced glyoxals. Involved in protection against reactive oxygen species (ROS). Important for viability in stationary phase. May negatively regulate TORC1 in response to nutrient limitation. The sequence is that of Probable glutathione-independent glyoxalase SNO4 from Saccharomyces cerevisiae (strain ATCC 204508 / S288c) (Baker's yeast).